We begin with the raw amino-acid sequence, 356 residues long: NADH-quinone oxidoreductase subunit H (356 aa).

8 helical membrane-spanning segments follow: residues 4-24 (ALILAWGIKILSLFFVILTGV), 79-99 (LLAPTISMTCAIMAWAVIPFG), 127-147 (GVLYMLAISSLSVYGIMIAGW), 166-186 (ISYELPMGLSIVAIVIMTGSL), 198-218 (MWNILSPPGFVAFFIYVTAMF), 251-271 (FFLAEYMNMITMSCLTTLLFF), 289-309 (FIGLGFFILKVLFFAFLFIWV), and 329-349 (MIPWGLFVVMFASIYTVYWKE).

It belongs to the complex I subunit 1 family. As to quaternary structure, NDH-1 is composed of 14 different subunits. Subunits NuoA, H, J, K, L, M, N constitute the membrane sector of the complex.

The protein resides in the cell inner membrane. The enzyme catalyses a quinone + NADH + 5 H(+)(in) = a quinol + NAD(+) + 4 H(+)(out). NDH-1 shuttles electrons from NADH, via FMN and iron-sulfur (Fe-S) centers, to quinones in the respiratory chain. The immediate electron acceptor for the enzyme in this species is believed to be ubiquinone. Couples the redox reaction to proton translocation (for every two electrons transferred, four hydrogen ions are translocated across the cytoplasmic membrane), and thus conserves the redox energy in a proton gradient. This subunit may bind ubiquinone. The protein is NADH-quinone oxidoreductase subunit H of Leptospira biflexa serovar Patoc (strain Patoc 1 / ATCC 23582 / Paris).